The sequence spans 399 residues: Argininosuccinate synthase (399 aa).

ATP is bound at residue 8 to 16 (AYSGGLDTT). Y87 provides a ligand contact to L-citrulline. Residue G117 coordinates ATP. T119, N123, and D124 together coordinate L-aspartate. L-citrulline is bound at residue N123. L-citrulline contacts are provided by R127, S175, E259, and Y271.

This sequence belongs to the argininosuccinate synthase family. Type 1 subfamily. As to quaternary structure, homotetramer.

It is found in the cytoplasm. The catalysed reaction is L-citrulline + L-aspartate + ATP = 2-(N(omega)-L-arginino)succinate + AMP + diphosphate + H(+). Its pathway is amino-acid biosynthesis; L-arginine biosynthesis; L-arginine from L-ornithine and carbamoyl phosphate: step 2/3. The polypeptide is Argininosuccinate synthase (Corynebacterium urealyticum (strain ATCC 43042 / DSM 7109)).